We begin with the raw amino-acid sequence, 569 residues long: Protein misato homolog 1 (569 aa).

Residues serine 41 and serine 495 each carry the phosphoserine modification.

The protein belongs to the misato family.

The protein localises to the mitochondrion outer membrane. Its subcellular location is the cytoplasm. Its function is as follows. Involved in the regulation of mitochondrial distribution and morphology. Required for mitochondrial fusion and mitochondrial network formation. The sequence is that of Protein misato homolog 1 (MSTO1) from Macaca fascicularis (Crab-eating macaque).